The sequence spans 349 residues: Isopentenyl-diphosphate delta-isomerase (349 aa).

6 to 7 provides a ligand contact to substrate; sequence RK. Residues 62–64, Ser-93, and Asn-122 each bind FMN; that span reads AMT. Substrate is bound at residue Gln-152. Residue Glu-153 participates in Mg(2+) binding. Residues Lys-184, Thr-214, 259-261, and 280-281 each bind FMN; these read GVR and AG.

The protein belongs to the IPP isomerase type 2 family. Homooctamer. Dimer of tetramers. FMN serves as cofactor. The cofactor is NADPH. Mg(2+) is required as a cofactor.

It is found in the cytoplasm. It carries out the reaction isopentenyl diphosphate = dimethylallyl diphosphate. Its function is as follows. Involved in the biosynthesis of isoprenoids. Catalyzes the 1,3-allylic rearrangement of the homoallylic substrate isopentenyl (IPP) to its allylic isomer, dimethylallyl diphosphate (DMAPP). In Geobacillus sp. (strain WCH70), this protein is Isopentenyl-diphosphate delta-isomerase.